We begin with the raw amino-acid sequence, 122 residues long: uncharacterized protein (122 aa).

This is an uncharacterized protein from Escherichia coli (strain K12).